Here is a 20-residue protein sequence, read N- to C-terminus: Unknown protein NF015 from 2D-PAGE (20 aa).

The disordered stretch occupies residues threonine 1 to glutamate 20.

The polypeptide is Unknown protein NF015 from 2D-PAGE (Naegleria fowleri (Brain eating amoeba)).